The primary structure comprises 351 residues: MINNPLLTVKNLNKFFNEQQVLHDISFSLQRGEILFLLGASGCGKTTLLRAIAGFEHPNTGEIWLKERLIFGENFNLPTQQRHLGYVVQEGVLFPHLNVYRNIAYGLGNGKGKNSEEKTRIEQIMQLTGIFELADRFPHQLSGGQQQRVALARALAPNPELILLDEPFSALDEHLRQQIRQEMLQALRQSGASAIFVTHDRDESLRYADKIAIIQQGKILQIDTPRTLYWSPNHLETAKFMGESIVLPANLLDENTAQCQLGNIPIKNKSISQNQGRILLRPEQFSLFKTSENPTALFNGQIKQIEFKGKITSIQIEINGYAIWIENVISPDLSIGDNLPVYLHRKGLFYA.

Positions 7-241 (LTVKNLNKFF…PNHLETAKFM (235 aa)) constitute an ABC transporter domain. Residue 39–46 (GASGCGKT) participates in ATP binding.

This sequence belongs to the ABC transporter superfamily. Fe(3+) ion importer (TC 3.A.1.10) family. In terms of assembly, the complex is composed of two ATP-binding proteins (FbpC), two transmembrane proteins (FbpB) and a solute-binding protein (FbpA).

It localises to the cell inner membrane. It catalyses the reaction Fe(3+)(out) + ATP + H2O = Fe(3+)(in) + ADP + phosphate + H(+). Part of the ABC transporter complex FbpABC involved in Fe(3+) ions import. Responsible for energy coupling to the transport system. This chain is Fe(3+) ions import ATP-binding protein FbpC, found in Haemophilus influenzae (strain 86-028NP).